Reading from the N-terminus, the 33-residue chain is DAQEXKRVLGQLHGGPFSASAKYFGQAHGGXEK.

Its function is as follows. Suppresses expansion of husk leaf blades. The polypeptide is Suppressor protein HFN40 (Zea mays (Maize)).